The following is a 181-amino-acid chain: Isopentenyl-diphosphate Delta-isomerase (181 aa).

The Mn(2+) site is built by histidine 25 and histidine 32. In terms of domain architecture, Nudix hydrolase spans 30-164; it reads PLHLAFSCWL…PWAFSPWMVM (135 aa). Cysteine 67 is an active-site residue. Cysteine 67 contacts Mg(2+). Histidine 69 lines the Mn(2+) pocket. A Mg(2+)-binding site is contributed by glutamate 87. 2 residues coordinate Mn(2+): glutamate 114 and glutamate 116. Glutamate 116 is an active-site residue.

This sequence belongs to the IPP isomerase type 1 family. In terms of assembly, homodimer. Mg(2+) serves as cofactor. Requires Mn(2+) as cofactor.

The protein resides in the cytoplasm. It catalyses the reaction isopentenyl diphosphate = dimethylallyl diphosphate. Its pathway is isoprenoid biosynthesis; dimethylallyl diphosphate biosynthesis; dimethylallyl diphosphate from isopentenyl diphosphate: step 1/1. In terms of biological role, catalyzes the 1,3-allylic rearrangement of the homoallylic substrate isopentenyl (IPP) to its highly electrophilic allylic isomer, dimethylallyl diphosphate (DMAPP). The protein is Isopentenyl-diphosphate Delta-isomerase of Salmonella choleraesuis (strain SC-B67).